We begin with the raw amino-acid sequence, 153 residues long: ATP synthase subunit b' (153 aa).

A helical membrane pass occupies residues 20 to 40 (TLPLMAAQVVLLTFILNALFF).

The protein belongs to the ATPase B chain family. F-type ATPases have 2 components, F(1) - the catalytic core - and F(0) - the membrane proton channel. F(1) has five subunits: alpha(3), beta(3), gamma(1), delta(1), epsilon(1). F(0) has four main subunits: a(1), b(1), b'(1) and c(10-14). The alpha and beta chains form an alternating ring which encloses part of the gamma chain. F(1) is attached to F(0) by a central stalk formed by the gamma and epsilon chains, while a peripheral stalk is formed by the delta, b and b' chains.

The protein resides in the cellular thylakoid membrane. In terms of biological role, f(1)F(0) ATP synthase produces ATP from ADP in the presence of a proton or sodium gradient. F-type ATPases consist of two structural domains, F(1) containing the extramembraneous catalytic core and F(0) containing the membrane proton channel, linked together by a central stalk and a peripheral stalk. During catalysis, ATP synthesis in the catalytic domain of F(1) is coupled via a rotary mechanism of the central stalk subunits to proton translocation. Functionally, component of the F(0) channel, it forms part of the peripheral stalk, linking F(1) to F(0). The b'-subunit is a diverged and duplicated form of b found in plants and photosynthetic bacteria. The chain is ATP synthase subunit b' from Prochlorococcus marinus (strain SARG / CCMP1375 / SS120).